The sequence spans 53 residues: Chlorophyll a-b binding protein 1, chloroplastic (53 aa).

Phenylalanine 18 is a chlorophyll b binding site. Positions 48 and 51 each coordinate chlorophyll a. Arginine 53 lines the chlorophyll b pocket.

Belongs to the light-harvesting chlorophyll a/b-binding (LHC) protein family. The LHC complex consists of chlorophyll a-b binding proteins. The cofactor is Binds at least 14 chlorophylls (8 Chl-a and 6 Chl-b) and carotenoids such as lutein and neoxanthin.. Photoregulated by reversible phosphorylation of its threonine residues.

It localises to the plastid. Its subcellular location is the chloroplast thylakoid membrane. In terms of biological role, the light-harvesting complex (LHC) functions as a light receptor, it captures and delivers excitation energy to photosystems with which it is closely associated. This is Chlorophyll a-b binding protein 1, chloroplastic from Populus euphratica (Euphrates poplar).